The sequence spans 243 residues: R-spondin-2 (243 aa).

An N-terminal signal peptide occupies residues 1–21; the sequence is MQFQLFSFVLIILNCVDYSHC. Cystine bridges form between cysteine 40–cysteine 46, cysteine 43–cysteine 52, cysteine 55–cysteine 74, cysteine 78–cysteine 93, cysteine 96–cysteine 104, cysteine 101–cysteine 110, cysteine 113–cysteine 124, cysteine 128–cysteine 141, cysteine 145–cysteine 187, cysteine 156–cysteine 163, and cysteine 196–cysteine 203. Residues 90 to 134 form an FU repeat; sequence MNRCSRCRIENCDSCFSRDFCIKCKSGFYSHKGQCFEECPEGFAP. Positions 144-204 constitute a TSP type-1 domain; sequence GCEVGPWSEW…RCKMAMRHCP (61 aa). The N-linked (GlcNAc...) asparagine glycan is linked to asparagine 160. A disordered region spans residues 202–243; that stretch reads HCPGGTRTTKKKDKKNKKKKKKLLERAQEQHSVVLATDRSSQ. A compositionally biased stretch (basic residues) spans 209–224; it reads TTKKKDKKNKKKKKKL.

The protein belongs to the R-spondin family. In terms of assembly, binds heparin.

The protein localises to the secreted. Activator of the canonical Wnt signaling pathway by acting as a ligand for lgr4-6 receptors. Upon binding to lgr4-6 (lgr4, lgr5 or lgr6), lgr4-6 associate with phosphorylated lrp6 and frizzled receptors that are activated by extracellular Wnt receptors, triggering the canonical Wnt signaling pathway to increase expression of target genes. Acts both in the canonical. Wnt/beta-catenin-dependent pathway and in non-canonical Wnt signaling pathway. Activates neural markers and promotes muscle formation. Overexpression blocks activin, nodal and BMP4 signaling, suggesting that it may negatively regulate the TGF-beta pathway. During embryonic development, plays a crucial role in limb specification, amplifying the Wnt signaling pathway independently of LGR4-6 receptors, possibly by acting as a direct antagonistic ligand to RNF43 and ZNRF3, hence governing the number of limbs an embryo should form. The polypeptide is R-spondin-2 (rspo2) (Xenopus tropicalis (Western clawed frog)).